The following is a 122-amino-acid chain: Zein-alpha B49 (122 aa).

It belongs to the zein family.

Functionally, zeins are major seed storage proteins. In Zea mays (Maize), this protein is Zein-alpha B49.